Here is a 315-residue protein sequence, read N- to C-terminus: Ribosomal RNA small subunit methyltransferase H (315 aa).

Residues 37–39 (AGH), aspartate 57, tyrosine 84, aspartate 105, and glutamine 112 each bind S-adenosyl-L-methionine.

Belongs to the methyltransferase superfamily. RsmH family.

The protein localises to the cytoplasm. It catalyses the reaction cytidine(1402) in 16S rRNA + S-adenosyl-L-methionine = N(4)-methylcytidine(1402) in 16S rRNA + S-adenosyl-L-homocysteine + H(+). Its function is as follows. Specifically methylates the N4 position of cytidine in position 1402 (C1402) of 16S rRNA. This chain is Ribosomal RNA small subunit methyltransferase H, found in Lachnospira eligens (strain ATCC 27750 / DSM 3376 / VPI C15-48 / C15-B4) (Eubacterium eligens).